Reading from the N-terminus, the 81-residue chain is Large ribosomal subunit protein bL27 (81 aa).

The segment at 1–22 is disordered; sequence MAHKTGQSSSSNGRESKSKRLG.

The protein belongs to the bacterial ribosomal protein bL27 family.

This Opitutus terrae (strain DSM 11246 / JCM 15787 / PB90-1) protein is Large ribosomal subunit protein bL27.